Reading from the N-terminus, the 219-residue chain is Ribose-5-phosphate isomerase A (219 aa).

Substrate is bound by residues 28–31 (TGST), 81–84 (DGAD), and 94–97 (KGGG). The active-site Proton acceptor is glutamate 103. A substrate-binding site is contributed by lysine 121.

The protein belongs to the ribose 5-phosphate isomerase family. Homodimer.

The enzyme catalyses aldehydo-D-ribose 5-phosphate = D-ribulose 5-phosphate. It participates in carbohydrate degradation; pentose phosphate pathway; D-ribose 5-phosphate from D-ribulose 5-phosphate (non-oxidative stage): step 1/1. Its function is as follows. Catalyzes the reversible conversion of ribose-5-phosphate to ribulose 5-phosphate. This Edwardsiella ictaluri (strain 93-146) protein is Ribose-5-phosphate isomerase A.